The primary structure comprises 1058 residues: Leucine-rich repeat and coiled-coil domain-containing protein PF3D7_0703800 (1058 aa).

A compositionally biased stretch (basic residues) spans 1–10; that stretch reads MAIKKKKKET. The segment at 1 to 34 is disordered; the sequence is MAIKKKKKETKSKDNNNDNLRNEKKSTNLENGKY. A compositionally biased stretch (basic and acidic residues) spans 11-34; it reads KSKDNNNDNLRNEKKSTNLENGKY. Positions 515–544 form a coiled coil; that stretch reads LKQLYTFIKNYENNNDKLNIKSQIINKDKN. The span at 641-661 shows a compositional bias: basic and acidic residues; the sequence is ENKDHLQHEEHTHEEEPKDAN. Disordered regions lie at residues 641 to 665 and 706 to 728; these read ENKDHLQHEEHTHEEEPKDANGDMV and NIEDKSGDMENMKEPNGDMENMK. A coiled-coil region spans residues 872-905; that stretch reads NYDHTQENILKNKNNMEDQNNLLEQNIMTDQLQN.

The polypeptide is Leucine-rich repeat and coiled-coil domain-containing protein PF3D7_0703800 (Plasmodium falciparum (isolate 3D7)).